Here is a 349-residue protein sequence, read N- to C-terminus: Merozoite surface protein P38 (349 aa).

The signal sequence occupies residues 1-21; the sequence is MKRWSIITGIVIIFCILTCKG. 6-Cys domains are found at residues 22-149 and 153-301; these read QVEN…ISNG and KIPG…YLTN. Disulfide bonds link C77/C127, C157/C183, C197/C278, and C208/C276. N-linked (GlcNAc...) asparagine glycosylation is found at N294, N295, and N301. Residue N315 is the site of GPI-anchor amidated asparagine attachment. Residues 316-349 constitute a propeptide, removed in mature form; that stretch reads SEIFERIEREEISFAFSSYLSITLILLYLFFLNF.

It is found in the cell surface. It localises to the cell membrane. This chain is Merozoite surface protein P38 (PFS38), found in Plasmodium falciparum (isolate 3D7).